The following is a 919-amino-acid chain: Probable disease resistance protein At4g27220 (919 aa).

2 coiled-coil regions span residues 1 to 30 and 74 to 95; these read MFRSNARALNRALERLKNVQTKVNEALKRS and VEILEKVKRLEEQGQDLIKKIS. One can recognise an NB-ARC domain in the interval 121–399; it reads MLDKLKDCLK…AEGLLDGQHH (279 aa). 141 to 148 is an ATP binding site; it reads GMGGVGKT. LRR repeat units follow at residues 447-468, 469-492, 494-516, 519-540, 542-564, 565-587, 588-610, and 611-635; these read GEGFHSLVMAGRGLIEFPQDKF, VSSVQRVSLMANKLERLPNNVIEG, ETLVLLLQGNSHVKEVPNGFLQA, NLRILDLSGVRIRTLPDSFSNL, SLRSLVLRNCKKLRNLPSLESLV, KLQFLDLHESAIRELPRGLEALS, SLRYICVSNTYQLQSIPAGTILQ, and LSSLEVLDMAGSAYSWGIKGEEREG.

Belongs to the disease resistance NB-LRR family.

In terms of biological role, probable disease resistance protein. The polypeptide is Probable disease resistance protein At4g27220 (Arabidopsis thaliana (Mouse-ear cress)).